Here is a 478-residue protein sequence, read N- to C-terminus: MKVTLPDFRQAGVLVVGDVMLDRYWYGPTSRISPEAPVPVVKVDTIEERPGGAANVAMNIAALGAGSRLVGLTGIDDAARALNAKLGEVNVKCDFVSVPTHPTITKLRVLSRNQQLIRLDFEEGFEGIDPQPIIERIQLALPKIGALVLSDYAKGALAHVQTMIQTAKAAGVPVLIDPKGTDFARYRGATLLTPNLSEFEAVAGRCKTEEELVERGMQLVADYELSALLITRSEQGMTLLQPGKAPLHLPTQAQEVYDVTGAGDTVIGVLAAALAAGNPLEEACFLANAAAGVVVGKLGTSTVTPIELENAIRGRADTGFGVMTEEQLKKAVELARQRGEKIVMTNGCFDILHAGHVSYLANARKLGDRLIVAVNSDASTKRLKGPTRPVNPLPQRMIVLGALEAVDWVVPFEEDTPQRLIASILPDILVKGGDYQPHEIAGSEEVWANGGEVKVLNFEDGCSTTNIINTIKANASKS.

A ribokinase region spans residues 1–318 (MKVTLPDFRQ…ENAIRGRADT (318 aa)). Residue 195–198 (NLSE) participates in ATP binding. D264 is a catalytic residue. A cytidylyltransferase region spans residues 344-478 (MTNGCFDILH…NTIKANASKS (135 aa)).

The protein in the N-terminal section; belongs to the carbohydrate kinase PfkB family. In the C-terminal section; belongs to the cytidylyltransferase family. As to quaternary structure, homodimer.

The catalysed reaction is D-glycero-beta-D-manno-heptose 7-phosphate + ATP = D-glycero-beta-D-manno-heptose 1,7-bisphosphate + ADP + H(+). It catalyses the reaction D-glycero-beta-D-manno-heptose 1-phosphate + ATP + H(+) = ADP-D-glycero-beta-D-manno-heptose + diphosphate. It participates in nucleotide-sugar biosynthesis; ADP-L-glycero-beta-D-manno-heptose biosynthesis; ADP-L-glycero-beta-D-manno-heptose from D-glycero-beta-D-manno-heptose 7-phosphate: step 1/4. Its pathway is nucleotide-sugar biosynthesis; ADP-L-glycero-beta-D-manno-heptose biosynthesis; ADP-L-glycero-beta-D-manno-heptose from D-glycero-beta-D-manno-heptose 7-phosphate: step 3/4. Catalyzes the phosphorylation of D-glycero-D-manno-heptose 7-phosphate at the C-1 position to selectively form D-glycero-beta-D-manno-heptose-1,7-bisphosphate. Its function is as follows. Catalyzes the ADP transfer from ATP to D-glycero-beta-D-manno-heptose 1-phosphate, yielding ADP-D-glycero-beta-D-manno-heptose. In Pectobacterium carotovorum subsp. carotovorum (strain PC1), this protein is Bifunctional protein HldE.